Here is a 422-residue protein sequence, read N- to C-terminus: Dihydrolipoyllysine-residue succinyltransferase component of 2-oxoglutarate dehydrogenase complex (422 aa).

One can recognise a Lipoyl-binding domain in the interval 1–76 (MPEVKVPELA…EVGQAIAIIG (76 aa)). Lys-42 is modified (N6-lipoyllysine). Residues 77-184 (EGSGNASKEN…APAKEEKKYN (108 aa)) are disordered. Polar residues-rich tracts occupy residues 80–94 (GNAS…TPQQ) and 116–130 (NQAN…NATP). The Peripheral subunit-binding (PSBD) domain maps to 127–163 (NATPSARRYARENGVNLAEVSPKTNDVVRKEDIDKKQ). Residues 152 to 163 (DVVRKEDIDKKQ) are compositionally biased toward basic and acidic residues. Over residues 164-176 (QAPASTQTTQQAP) the composition is skewed to low complexity. Residues His-393 and Asp-397 contribute to the active site.

This sequence belongs to the 2-oxoacid dehydrogenase family. In terms of assembly, forms a 24-polypeptide structural core with octahedral symmetry. Part of the 2-oxoglutarate dehydrogenase (OGDH) complex composed of E1 (2-oxoglutarate dehydrogenase), E2 (dihydrolipoamide succinyltransferase) and E3 (dihydrolipoamide dehydrogenase); the complex contains multiple copies of the three enzymatic components (E1, E2 and E3). (R)-lipoate is required as a cofactor.

It catalyses the reaction N(6)-[(R)-dihydrolipoyl]-L-lysyl-[protein] + succinyl-CoA = N(6)-[(R)-S(8)-succinyldihydrolipoyl]-L-lysyl-[protein] + CoA. Its pathway is amino-acid degradation; L-lysine degradation via saccharopine pathway; glutaryl-CoA from L-lysine: step 6/6. Its function is as follows. E2 component of the 2-oxoglutarate dehydrogenase (OGDH) complex which catalyzes the second step in the conversion of 2-oxoglutarate to succinyl-CoA and CO(2). This Staphylococcus aureus (strain Mu50 / ATCC 700699) protein is Dihydrolipoyllysine-residue succinyltransferase component of 2-oxoglutarate dehydrogenase complex (odhB).